Here is a 36-residue protein sequence, read N- to C-terminus: DGANAEATDNKPGVFERDEKKCCWNRACTRLVPCSK.

A propeptide spanning residues 1–21 (DGANAEATDNKPGVFERDEKK) is cleaved from the precursor. 2 disulfides stabilise this stretch: C22–C28 and C23–C34.

It belongs to the conotoxin A superfamily. In terms of tissue distribution, expressed by the venom duct.

It is found in the secreted. In Conus bullatus (Bubble cone), this protein is Conotoxin Bu21.